The chain runs to 406 residues: Lissencephaly-1 homolog (406 aa).

One can recognise a LisH domain in the interval 7-39 (QREELNKAIADYLRSNGYESALEAFQKEAEMPG). The stretch at 54-81 (TSVIRLQKKVMDLEAKLAEAEKEFQSGG) forms a coiled coil. A compositionally biased stretch (basic and acidic residues) spans 74 to 89 (EKEFQSGGPNKKERSP). Residues 74–99 (EKEFQSGGPNKKERSPSEWIPRPPAR) are disordered. WD repeat units follow at residues 104–145 (GHRS…RTLK), 146–185 (GHTDAVQDVSFDQQGKLLASCSADMTIKLWDFQTFENIKT), 188–227 (GHDHNVSSVHFMPNGDFLISASRDKTIKMWELATGYCVKT), 230–269 (GHREWVRTVRVNQDGSLLASCSNDQTVRVWVVANKECKAE), 272–329 (EHEH…CIMT), 332–371 (GHDNWVRGVVWHPGGKYIISASDDKTIRVWDYKNKRCQKT), and 374–406 (AHQHFCTSIDFHRSAPYVITGSVDQTVKVWECR).

This sequence belongs to the WD repeat LIS1/nudF family.

The protein resides in the cytoplasm. The protein localises to the cytoskeleton. It localises to the microtubule organizing center. It is found in the centrosome. Its function is as follows. Positively regulates the activity of the minus-end directed microtubule motor protein dynein. May enhance dynein-mediated microtubule sliding by targeting dynein to the microtubule plus end. Required for several dynein- and microtubule-dependent processes. The chain is Lissencephaly-1 homolog from Branchiostoma floridae (Florida lancelet).